A 955-amino-acid chain; its full sequence is MSGQAEGSTNTEEVPRFRYTAQTAAEIEQRWQRRWEELGTFHAPNPAGSLKGEVSDEKLFVQDMFPYPSGSGLHVGHPLGFIGTDVYARFNRMLGKNVLHTMGFDSFGLPAEQYAVQTGTHPRTTTEKNIERYLTQIRRLGLGHDERRRVATTDIPFYRWTQWIFLQIFHSWYDTDADRARPISELEAQFAAGERATPDGRPWAELSRTEQRRIIDSYRLVYLSEAPVNWAPGLGTVVANEEVTADGLTERGNFPVFRRNLKQWMMRITAYADRLIDDLDRLDWPDKIKTMQRNWIGRSQGANVVFPLDGSAGSIEVFTTRPDTLFGVTYLVLAPEHPLVDELTAAQWPQDPDLRWTGGAATPAEAVAQYRRAASMKSDLDRQENKEKTGVFTGAWATNPVNGEQVPVFIADYVLMGYGTGAIMAVPGEDQRDFDFAEAFGLPVVRTVQPSEGFEGGAYSGEGPRINSANPDVGLDLNGMHLDEAKKTIIEWLESHKHGSGTVQYKLRDWLFARQRYWGEPFPVVYDSDGIPLGLPESELPVVLPEVADYSPRTFDPEDADSRPEPPLAKATEWANVELDLGDGLKNYERDTNVMPQWAGSCWYQLRYIDPDNDQAFVDPANERYWMGKRPELHGPDDPGGLDLYIGGVEHGVLHLLYSRFWHKVLYDLGHVSSEEPYRRLYNQGYIQAYAYTDSRGVYVPAEEVEERDGKFFFQGEEVRREYGKMGKSLKNSVSPDEMADAYGADTLRLYEMAMGPLDASRPWATKDVVGSHRFLQRLWRNVVDENTGELRVTDDEPAIEVLRALHKTIAGVREDYRELRFNTAVAKLIELNNLLTKEYSATGAPRAVVGPLVLMVAPLAPHMAEELWSKLGHDGSLAHGPFPEADEQYLVEDTVEYPIQFNGKVRSRIVVPASAGQDEVKAAALADEKVVAALDGREPRKVIVVPGRLVNVVG.

A 'HIGH' region motif is present at residues Pro66–His77. Positions Lys725–Ser729 match the 'KMSKS' region motif. Lys728 lines the ATP pocket.

This sequence belongs to the class-I aminoacyl-tRNA synthetase family.

Its subcellular location is the cytoplasm. It carries out the reaction tRNA(Leu) + L-leucine + ATP = L-leucyl-tRNA(Leu) + AMP + diphosphate. The sequence is that of Leucine--tRNA ligase from Saccharopolyspora erythraea (strain ATCC 11635 / DSM 40517 / JCM 4748 / NBRC 13426 / NCIMB 8594 / NRRL 2338).